The primary structure comprises 663 residues: MQNWFKSGDSLNLVDLYVKKFMDLIEIERRCEMDFHKNEIIKLGKKRENVGRAILNLKGKFLGESLGCTIVRFGRKKPFKTEISPGDVVLVSKENPLQSDLYANVIYVGKNFIDVAFDVDVPKWVYKERVRVDLYVNDITFKRMKEALREFARKRDKLAYIILGIEHPEKPLREDIKLEFYDKNLNESQKLAVKKAVLSRDLYLIHGPPGTGKTRTITEVIVQEVKFNKHKVLATADSNIAADNILEYLIKKYPDLKVVRVGHPTRISKDLIQHSLPYLIENHEKYQEILALREKIKEIKEQRDKFLKPSPRWRRGMSDEQILKVAKRKKSYRGIPKEKIVSMAEWIIRNKKIKRIINNLDEITEKIMNEILAEADVIVATNSMAGSEILKGWEFDVIVIDEGSQAMEPSCLIPIVKGRKLIMAGDHKQLPPTVLSENEELKKTLFERLIKKYPEFSSILEIQYRMNEKIMEFPNKMFYNNKLKADESVKNITLLDLVKEEEIDEVDRDIINEIPVQFINVEGIERKDKESPSYYNIEEAEKVLEIVKKLVKYKIPTNVITPYDAQVRYLRRLFEEHNIDIEVNTVDGFQGRENEAIVISFVRTKNFGFLKDLRRLNVAITRAKRKLILIGNENLLKQDKVYNEMIKWAKSVEEEHKNKIIQK.

207 to 214 is a binding site for ATP; it reads GPPGTGKT.

This sequence belongs to the DNA2/NAM7 helicase family.

This is an uncharacterized protein from Methanocaldococcus jannaschii (strain ATCC 43067 / DSM 2661 / JAL-1 / JCM 10045 / NBRC 100440) (Methanococcus jannaschii).